Reading from the N-terminus, the 384-residue chain is Putative 8-amino-7-oxononanoate synthase (384 aa).

Arginine 22 provides a ligand contact to substrate. Position 109–110 (glycine 109–tyrosine 110) interacts with pyridoxal 5'-phosphate. A substrate-binding site is contributed by histidine 134. Pyridoxal 5'-phosphate-binding positions include serine 182, aspartate 207–histidine 210, and threonine 236–lysine 239. N6-(pyridoxal phosphate)lysine is present on lysine 239. Threonine 348 provides a ligand contact to substrate.

It belongs to the class-II pyridoxal-phosphate-dependent aminotransferase family. BioF subfamily. Homodimer. Pyridoxal 5'-phosphate serves as cofactor.

It carries out the reaction 6-carboxyhexanoyl-[ACP] + L-alanine + H(+) = (8S)-8-amino-7-oxononanoate + holo-[ACP] + CO2. Its pathway is cofactor biosynthesis; biotin biosynthesis. Functionally, catalyzes the decarboxylative condensation of pimeloyl-[acyl-carrier protein] and L-alanine to produce 8-amino-7-oxononanoate (AON), [acyl-carrier protein], and carbon dioxide. The chain is Putative 8-amino-7-oxononanoate synthase (bioF) from Caulobacter vibrioides (strain ATCC 19089 / CIP 103742 / CB 15) (Caulobacter crescentus).